Consider the following 386-residue polypeptide: Patatin-06 (386 aa).

Positions 1–23 (MATTKSFLILFFMILATTSSTCA) are cleaved as a signal peptide. In terms of domain architecture, PNPLA spans 32 to 229 (LSIDGGGIKG…TVGDPALLSL (198 aa)). The GXGXXG motif lies at 36–41 (GGGIKG). The GXSXG motif lies at 75-79 (GTSTG). Residue S77 is the Nucleophile of the active site. The N-linked (GlcNAc...) asparagine glycan is linked to N115. The Proton acceptor role is filled by D215. The DGA/G signature appears at 215-217 (DGG). Positions 321-384 (ENALTGTTTE…NRKKLRANKA (64 aa)) form a coiled coil.

The protein belongs to the patatin family. In terms of tissue distribution, tuber.

It localises to the vacuole. In terms of biological role, probable lipolytic acyl hydrolase (LAH), an activity which is thought to be involved in the response of tubers to pathogens. This is Patatin-06 from Solanum tuberosum (Potato).